The primary structure comprises 223 residues: UPF0758 protein Plut_0598 (223 aa).

In terms of domain architecture, MPN spans 100–222 (RVQGAKDVFE…WFSFRESNLL (123 aa)). 3 residues coordinate Zn(2+): histidine 171, histidine 173, and aspartate 184. A JAMM motif motif is present at residues 171-184 (HNHPSGDTEPSNAD).

Belongs to the UPF0758 family.

The chain is UPF0758 protein Plut_0598 from Chlorobium luteolum (strain DSM 273 / BCRC 81028 / 2530) (Pelodictyon luteolum).